Consider the following 236-residue polypeptide: Rho-related GTP-binding protein RhoV (236 aa).

The tract at residues 1-27 is disordered; that stretch reads MPPRELSEAESSPLRSPTPPPGRGSAS. Residue S25 is modified to Phosphoserine. GTP contacts are provided by residues 38–45, 85–89, and 143–146; these read GDGAVGKS, DTAGQ, and TQAD. The S-palmitoyl cysteine moiety is linked to residue C234.

Belongs to the small GTPase superfamily. Rho family. As to quaternary structure, interacts with PAK2. Mg(2+) serves as cofactor.

It is found in the cell membrane. The protein resides in the endosome membrane. Functionally, plays a role in the control of the actin cytoskeleton via activation of the JNK pathway. This Bos taurus (Bovine) protein is Rho-related GTP-binding protein RhoV.